The primary structure comprises 458 residues: Translation initiation factor eIF2B subunit gamma (458 aa).

Serine 291 bears the Phosphoserine mark.

It belongs to the eIF-2B gamma/epsilon subunits family. As to quaternary structure, component of the translation initiation factor 2B (eIF2B) complex which is a heterodecamer of two sets of five different subunits: alpha, beta, gamma, delta and epsilon. Subunits alpha, beta and delta comprise a regulatory subcomplex and subunits epsilon and gamma comprise a catalytic subcomplex. Within the complex, the hexameric regulatory complex resides at the center, with the two heterodimeric catalytic subcomplexes bound on opposite sides.

Its subcellular location is the cytoplasm. The protein localises to the cytosol. Functionally, acts as a component of the translation initiation factor 2B (eIF2B) complex, which catalyzes the exchange of GDP for GTP on the eukaryotic initiation factor 2 (eIF2) complex gamma subunit. Its guanine nucleotide exchange factor activity is repressed when bound to eIF2 complex phosphorylated on the alpha subunit, thereby limiting the amount of methionyl-initiator methionine tRNA available to the ribosome and consequently global translation is repressed. In Schizosaccharomyces pombe (strain 972 / ATCC 24843) (Fission yeast), this protein is Translation initiation factor eIF2B subunit gamma (tif223).